A 356-amino-acid chain; its full sequence is Epoxide hydrolase B (356 aa).

An AB hydrolase-1 domain is found at 28–129 (PLVVLLHGFP…RCAGVVGISV (102 aa)). Catalysis depends on Asp-104, which acts as the Nucleophile. The active-site Proton acceptor is the His-333.

This sequence belongs to the AB hydrolase superfamily. Epoxide hydrolase family. As to quaternary structure, homodimer.

The catalysed reaction is an epoxide + H2O = an ethanediol. Could be involved in detoxification of extraneous host-cell epoxides. Catalyzes the hydrolysis of small aromatic epoxide-containing substrates such as trans-1,3-diphenylpropene oxide, trans and cis-stilbene oxide, and terpenoid epoxide. This chain is Epoxide hydrolase B, found in Mycobacterium tuberculosis (strain CDC 1551 / Oshkosh).